A 111-amino-acid polypeptide reads, in one-letter code: Cyclin-dependent protein kinase inhibitor SMR2 (111 aa).

The interval 1-66 (MSKLLETLEE…PPPRKRPREI (66 aa)) is disordered. Residues 10–35 (EEKTVEQKPRSQEEEDHQDSSKKEEL) are compositionally biased toward basic and acidic residues.

As to quaternary structure, interacts with CYCD2-1. Interacts with CDKB1-1. In terms of tissue distribution, expressed at low levels in roots and stems. Expressed in the root vascular tissue.

Its subcellular location is the nucleus. Functionally, cyclin-dependent protein kinase (CDK) inhibitor that restricts cell proliferation and cooperates with SIM and SMR1 to promote endoreplication during leaf development. The polypeptide is Cyclin-dependent protein kinase inhibitor SMR2 (Arabidopsis thaliana (Mouse-ear cress)).